The sequence spans 222 residues: GTP cyclohydrolase 1 (222 aa).

Residues Cys-111, His-114, and Cys-182 each contribute to the Zn(2+) site.

It belongs to the GTP cyclohydrolase I family. As to quaternary structure, toroid-shaped homodecamer, composed of two pentamers of five dimers.

It catalyses the reaction GTP + H2O = 7,8-dihydroneopterin 3'-triphosphate + formate + H(+). It functions in the pathway cofactor biosynthesis; 7,8-dihydroneopterin triphosphate biosynthesis; 7,8-dihydroneopterin triphosphate from GTP: step 1/1. In Citrobacter koseri (strain ATCC BAA-895 / CDC 4225-83 / SGSC4696), this protein is GTP cyclohydrolase 1.